Here is a 215-residue protein sequence, read N- to C-terminus: 2-dehydro-3-deoxy-phosphogluconate aldolase (215 aa).

Catalysis depends on Glu46, which acts as the Proton acceptor. Pyruvate contacts are provided by Arg50, Thr74, and Lys134. Catalysis depends on Lys134, which acts as the Schiff-base intermediate with substrate.

It belongs to the KHG/KDPG aldolase family. Homotrimer.

It catalyses the reaction 2-dehydro-3-deoxy-6-phospho-D-gluconate = D-glyceraldehyde 3-phosphate + pyruvate. It functions in the pathway carbohydrate acid metabolism; 2-dehydro-3-deoxy-D-gluconate degradation; D-glyceraldehyde 3-phosphate and pyruvate from 2-dehydro-3-deoxy-D-gluconate: step 2/2. Functionally, involved in the degradation of glucose via the Entner-Doudoroff pathway. Catalyzes the reversible, stereospecific retro-aldol cleavage of 2-keto-3-deoxy-6-phosphogluconate (KDPG) to pyruvate and D-glyceraldehyde-3-phosphate. Involved in the degradation of 3,6-anhydro-L-galactose (L-AnG), which is the major monomeric sugar of red macroalgae. The cleavage of KDPG to glyceraldehyde 3-phosphate and pyruvate is the sixth step of this pathway. This chain is 2-dehydro-3-deoxy-phosphogluconate aldolase, found in Pseudoalteromonas atlantica (strain T6c / ATCC BAA-1087).